Here is a 413-residue protein sequence, read N- to C-terminus: Glutamyl-tRNA reductase (413 aa).

Substrate is bound by residues 49-52 (TCNR), Ser105, 110-112 (EPQ), and Gln116. The active-site Nucleophile is the Cys50. 185–190 (GAGETI) contributes to the NADP(+) binding site.

It belongs to the glutamyl-tRNA reductase family. In terms of assembly, homodimer.

It catalyses the reaction (S)-4-amino-5-oxopentanoate + tRNA(Glu) + NADP(+) = L-glutamyl-tRNA(Glu) + NADPH + H(+). It participates in porphyrin-containing compound metabolism; protoporphyrin-IX biosynthesis; 5-aminolevulinate from L-glutamyl-tRNA(Glu): step 1/2. Catalyzes the NADPH-dependent reduction of glutamyl-tRNA(Glu) to glutamate 1-semialdehyde (GSA). This chain is Glutamyl-tRNA reductase, found in Coxiella burnetii (strain Dugway 5J108-111).